A 63-amino-acid chain; its full sequence is DNA-directed RNA polymerase 7 kDa subunit (63 aa).

This sequence belongs to the poxviridae DNA-directed RNA polymerase 7 kDa subunit family. In terms of assembly, the DNA-dependent RNA polymerase (vRNAP) consists of eight subunits encoded by early viral genes and termed according to their apparent molecular masses Rpo147, Rpo132, Rpo35, Rpo30, Rpo22, Rpo19, Rpo18, and Rpo7. The same holoenzyme, with the addition of the transcription-specificity factor RAP94, is used for early gene expression.

It is found in the virion. It carries out the reaction RNA(n) + a ribonucleoside 5'-triphosphate = RNA(n+1) + diphosphate. Functionally, part of the DNA-dependent RNA polymerase which catalyzes the transcription of viral DNA into RNA using the four ribonucleoside triphosphates as substrates. Responsible for the transcription of early, intermediate and late genes. DNA-dependent RNA polymerase associates with the early transcription factor (ETF), itself composed of OPG118 and OPG134, thereby allowing the early genes transcription. Late transcription, and probably also intermediate transcription, require newly synthesized RNA polymerase. The protein is DNA-directed RNA polymerase 7 kDa subunit (OPG090) of Homo sapiens (Human).